The chain runs to 777 residues: Degenerin unc-8 (777 aa).

Topologically, residues 1–128 (MSPLLTWNLI…VATSSFFGRY (128 aa)) are cytoplasmic. The helical transmembrane segment at 129-149 (VWAALFMCMLMAFLLQTYWTM) threads the bilayer. Over 150–689 (SEYLQYRTII…KETAGYTLVN (540 aa)) the chain is Extracellular. N-linked (GlcNAc...) asparagine glycans are attached at residues asparagine 274, asparagine 319, asparagine 357, asparagine 411, asparagine 453, asparagine 533, and asparagine 597. A helical membrane pass occupies residues 690–710 (LFSDFGGNIGLWIGFSVITFA). The Cytoplasmic segment spans residues 711 to 777 (EFAELFCEIC…NESTKELMSK (67 aa)). The segment at 752–777 (QRSPKKSQPGEDEVSTNESTKELMSK) is disordered.

It belongs to the amiloride-sensitive sodium channel (TC 1.A.6) family.

Its subcellular location is the membrane. In terms of biological role, sodium permeable non-voltage-sensitive ion channel. Involved in the activity-dependent removal of selected presynaptic proteins, such as synaptobrevin snb-1, and Ras-related rab-3, in the remodeling of GABAergic motor neurons. The polypeptide is Degenerin unc-8 (Caenorhabditis elegans).